The primary structure comprises 353 residues: Inositol-tetrakisphosphate 1-kinase 3 (353 aa).

A disordered region spans residues 1–25; that stretch reads MKLTDNEEITMNGTREMETTEQETS. The 1D-myo-inositol 1,3,4-trisphosphate site is built by Lys50 and Lys92. The ATP site is built by Arg127 and Lys177. Positions 138–350 constitute an ATP-grasp domain; the sequence is NLSDSNGRVG…QSQCKKRALA (213 aa). His188 and Lys220 together coordinate 1D-myo-inositol 1,3,4-trisphosphate. Residues 209-220 and Ser235 contribute to the ATP site; that span reads QEFVNHGGVLFK. Mg(2+)-binding residues include Asp300, Asp315, and Asn317. Asn317 is a 1D-myo-inositol 1,3,4-trisphosphate binding site.

It belongs to the ITPK1 family. Monomer. Mg(2+) is required as a cofactor. Highly expressed in leaves and flowers, and at lower levels in roots, stems, cauline leaves and siliques.

The enzyme catalyses 1D-myo-inositol 3,4,5,6-tetrakisphosphate + ATP = 1D-myo-inositol 1,3,4,5,6-pentakisphosphate + ADP + H(+). It carries out the reaction 1D-myo-inositol 1,3,4-trisphosphate + ATP = 1D-myo-inositol 1,3,4,5-tetrakisphosphate + ADP + H(+). The catalysed reaction is 1D-myo-inositol 1,3,4-trisphosphate + ATP = 1D-myo-inositol 1,3,4,6-tetrakisphosphate + ADP + H(+). Kinase that can phosphorylate various inositol polyphosphate such as Ins(3,4,5,6)P4 or Ins(1,3,4)P3. Phosphorylates Ins(3,4,5,6)P4 to form InsP5. This reaction is thought to have regulatory importance, since Ins(3,4,5,6)P4 is an inhibitor of plasma membrane Ca(2+)-activated Cl(-) channels, while Ins(1,3,4,5,6)P5 is not. Also phosphorylates Ins(1,3,4)P3 or a racemic mixture of Ins(1,4,6)P3 and Ins(3,4,6)P3 to form InsP4. Ins(1,3,4,6)P4 is an essential molecule in the hexakisphosphate (InsP6) pathway. The sequence is that of Inositol-tetrakisphosphate 1-kinase 3 (ITPK3) from Arabidopsis thaliana (Mouse-ear cress).